A 44-amino-acid chain; its full sequence is Tachystatin-A1 (44 aa).

3 cysteine pairs are disulfide-bonded: Cys-4–Cys-24, Cys-11–Cys-29, and Cys-23–Cys-41.

As to expression, granular hemocytes, small secretory granules.

It is found in the secreted. Functionally, exhibits stronger antimicrobial activity against the Gram-positive bacteria (S.aureus (IC(50) is 4.2 ug/ml)) and fungi (C.albicans (IC(50) is 3.0 ug/ml) and P.pastoris (IC(50) is 0.5 ug/ml)) than Gram-negative bacteria (E.coli (IC(50) is 25 ug/ml)). Binds to chitin (8.4 uM are required to obtain 50% of binding). Does not cause hemolysis on sheep erythrocytes. Has no blocking activity on the P-type calcium channel. The polypeptide is Tachystatin-A1 (Tachypleus tridentatus (Japanese horseshoe crab)).